Reading from the N-terminus, the 250-residue chain is Proteasome subunit alpha type-7-like (250 aa).

O-linked (GlcNAc) serine glycosylation occurs at Ser-132.

The protein belongs to the peptidase T1A family. In terms of assembly, the 26S proteasome consists of a 20S proteasome core and two 19S regulatory subunits. The 20S proteasome core is a barrel-shaped complex made of 28 subunits that are arranged in four stacked rings. The two outer rings are each formed by seven alpha subunits, and the two inner rings are formed by seven beta subunits. The proteolytic activity is exerted by three beta-subunits PSMB5, PSMB6 and PSMB7. PSMA7 interacts directly with the PSMG1-PSMG2 heterodimer which promotes 20S proteasome assembly. Interacts with HIF1A. Interacts with RAB7A. Interacts with PRKN. Interacts with ABL1 and ABL2. Interacts with EMAP2. Interacts with MAVS.

It is found in the cytoplasm. Its subcellular location is the nucleus. In terms of biological role, component of the 20S core proteasome complex involved in the proteolytic degradation of most intracellular proteins. This complex plays numerous essential roles within the cell by associating with different regulatory particles. Associated with two 19S regulatory particles, forms the 26S proteasome and thus participates in the ATP-dependent degradation of ubiquitinated proteins. The 26S proteasome plays a key role in the maintenance of protein homeostasis by removing misfolded or damaged proteins that could impair cellular functions, and by removing proteins whose functions are no longer required. Associated with the PA200 or PA28, the 20S proteasome mediates ubiquitin-independent protein degradation. This type of proteolysis is required in several pathways including spermatogenesis (20S-PA200 complex) or generation of a subset of MHC class I-presented antigenic peptides (20S-PA28 complex). Inhibits the transactivation function of HIF-1A under both normoxic and hypoxia-mimicking conditions. The interaction with EMAP2 increases the proteasome-mediated HIF-1A degradation under the hypoxic conditions. Plays a role in hepatitis C virus internal ribosome entry site-mediated translation. Mediates nuclear translocation of the androgen receptor (AR) and thereby enhances androgen-mediated transactivation. Promotes MAVS degradation and thereby negatively regulates MAVS-mediated innate immune response. The polypeptide is Proteasome subunit alpha type-7-like (PSMA7L) (Macaca fascicularis (Crab-eating macaque)).